A 515-amino-acid polypeptide reads, in one-letter code: MVLPFKHEPFTDFTVKENRKDYQDALAKVKEELGKDYPLVINGEKIYTDDKLISINPSNKNEVVGNVSKATKQHIEEAFTSAKEAFKEWKSWSAEDRARVLYRAAAIVRRRKHEFSAWLSYDAGKPWDQADGDTAEGIDFLEYYARHMVELEKGKPLADRPNEDNKYFYQPLGPGVVIPPWNFAFAIVCGTTVAPIVAGNPVLLKPSENTPVIAYKLVEVLEEAGLPKGVLNFVPGDPAEIGDYLVDHKDTHFINFTGSRATGVRIFERATKIQDGQTHLKRIVAEMGGKDTIIVDESADLDLAAESIVHSAFGFSGQKCSACSRAVIHESVYDEVIEKSVELAKTLTVGNPTEDNVYMASVVNQKQFDKIKDYIEVGKQEGELVFGGETDDNKGFFVHPTIFKDLDPKARIMQEEIFGPVVAFSKAKSFDELLDIANNTEYGLTGAVISNNRENLNRAQTEFLVGNLYFNRGCTAAIVGYQPFGGFKMSGTDSKAGGPDYLQHFLNAKVVTERF.

Catalysis depends on residues Glu286 and Cys320.

Belongs to the aldehyde dehydrogenase family. RocA subfamily.

It catalyses the reaction L-glutamate 5-semialdehyde + NAD(+) + H2O = L-glutamate + NADH + 2 H(+). The protein operates within amino-acid degradation; L-proline degradation into L-glutamate; L-glutamate from L-proline: step 2/2. The polypeptide is 1-pyrroline-5-carboxylate dehydrogenase (Oceanobacillus iheyensis (strain DSM 14371 / CIP 107618 / JCM 11309 / KCTC 3954 / HTE831)).